We begin with the raw amino-acid sequence, 481 residues long: Aspartyl/glutamyl-tRNA(Asn/Gln) amidotransferase subunit B (481 aa).

The protein belongs to the GatB/GatE family. GatB subfamily. In terms of assembly, heterotrimer of A, B and C subunits.

It catalyses the reaction L-glutamyl-tRNA(Gln) + L-glutamine + ATP + H2O = L-glutaminyl-tRNA(Gln) + L-glutamate + ADP + phosphate + H(+). It carries out the reaction L-aspartyl-tRNA(Asn) + L-glutamine + ATP + H2O = L-asparaginyl-tRNA(Asn) + L-glutamate + ADP + phosphate + 2 H(+). In terms of biological role, allows the formation of correctly charged Asn-tRNA(Asn) or Gln-tRNA(Gln) through the transamidation of misacylated Asp-tRNA(Asn) or Glu-tRNA(Gln) in organisms which lack either or both of asparaginyl-tRNA or glutaminyl-tRNA synthetases. The reaction takes place in the presence of glutamine and ATP through an activated phospho-Asp-tRNA(Asn) or phospho-Glu-tRNA(Gln). The sequence is that of Aspartyl/glutamyl-tRNA(Asn/Gln) amidotransferase subunit B from Carboxydothermus hydrogenoformans (strain ATCC BAA-161 / DSM 6008 / Z-2901).